A 524-amino-acid chain; its full sequence is Phosphoenolpyruvate carboxykinase (ATP) (524 aa).

3 residues coordinate substrate: arginine 52, tyrosine 188, and lysine 194. ATP contacts are provided by residues lysine 194, histidine 213, and glycine 229–threonine 237. Positions 194 and 213 each coordinate Mn(2+). Aspartate 250 provides a ligand contact to Mn(2+). Positions 278, 314, and 439 each coordinate ATP. Arginine 314 is a binding site for substrate.

Belongs to the phosphoenolpyruvate carboxykinase (ATP) family. Mn(2+) is required as a cofactor.

The protein resides in the cytoplasm. The catalysed reaction is oxaloacetate + ATP = phosphoenolpyruvate + ADP + CO2. It participates in carbohydrate biosynthesis; gluconeogenesis. Involved in the gluconeogenesis. Catalyzes the conversion of oxaloacetate (OAA) to phosphoenolpyruvate (PEP) through direct phosphoryl transfer between the nucleoside triphosphate and OAA. The polypeptide is Phosphoenolpyruvate carboxykinase (ATP) (Campylobacter jejuni subsp. doylei (strain ATCC BAA-1458 / RM4099 / 269.97)).